The primary structure comprises 492 residues: Glutamyl-tRNA(Gln) amidotransferase subunit A (492 aa).

Residues Lys-84 and Ser-159 each act as charge relay system in the active site. Ser-183 acts as the Acyl-ester intermediate in catalysis.

Belongs to the amidase family. GatA subfamily. In terms of assembly, heterotrimer of A, B and C subunits.

It carries out the reaction L-glutamyl-tRNA(Gln) + L-glutamine + ATP + H2O = L-glutaminyl-tRNA(Gln) + L-glutamate + ADP + phosphate + H(+). Functionally, allows the formation of correctly charged Gln-tRNA(Gln) through the transamidation of misacylated Glu-tRNA(Gln) in organisms which lack glutaminyl-tRNA synthetase. The reaction takes place in the presence of glutamine and ATP through an activated gamma-phospho-Glu-tRNA(Gln). In Anaeromyxobacter dehalogenans (strain 2CP-C), this protein is Glutamyl-tRNA(Gln) amidotransferase subunit A.